Here is a 284-residue protein sequence, read N- to C-terminus: Pantothenate synthetase (284 aa).

Met30 to His37 is an ATP binding site. Catalysis depends on His37, which acts as the Proton donor. Gln61 is a binding site for (R)-pantoate. Gln61 lines the beta-alanine pocket. Gly149–Asp152 lines the ATP pocket. Gln155 serves as a coordination point for (R)-pantoate. Residues Val178 and Leu186 to Arg189 contribute to the ATP site.

Belongs to the pantothenate synthetase family. In terms of assembly, homodimer.

The protein localises to the cytoplasm. It catalyses the reaction (R)-pantoate + beta-alanine + ATP = (R)-pantothenate + AMP + diphosphate + H(+). Its pathway is cofactor biosynthesis; (R)-pantothenate biosynthesis; (R)-pantothenate from (R)-pantoate and beta-alanine: step 1/1. Functionally, catalyzes the condensation of pantoate with beta-alanine in an ATP-dependent reaction via a pantoyl-adenylate intermediate. This Aeromonas salmonicida (strain A449) protein is Pantothenate synthetase.